Consider the following 456-residue polypeptide: Putative dihydroorotase (456 aa).

The protein belongs to the metallo-dependent hydrolases superfamily. DHOase family. Class I DHOase subfamily.

It carries out the reaction (S)-dihydroorotate + H2O = N-carbamoyl-L-aspartate + H(+). It participates in pyrimidine metabolism; UMP biosynthesis via de novo pathway; (S)-dihydroorotate from bicarbonate: step 3/3. Its function is as follows. Catalyzes the reversible cyclization of carbamoyl aspartate to dihydroorotate. This is Putative dihydroorotase from Rhodopirellula baltica (strain DSM 10527 / NCIMB 13988 / SH1).